Here is a 458-residue protein sequence, read N- to C-terminus: Type III intermediate filament (458 aa).

The head stretch occupies residues 1 to 100 (MEKGYKMNRS…KVNRTNEKAE (100 aa)). One can recognise an IF rod domain in the interval 97 to 405 (EKAEMIELND…KLLEGEENRI (309 aa)). Residues 406-458 (SMPLPSFGSMSLSDAMFEQQPFENRTSKKKIVIKTVETSGGDVISETTQKIED) are tail.

This sequence belongs to the intermediate filament family.

In Tetronarce californica (Pacific electric ray), this protein is Type III intermediate filament.